A 250-amino-acid polypeptide reads, in one-letter code: Pyrroloquinoline-quinone synthase (250 aa).

The protein belongs to the PqqC family.

It catalyses the reaction 6-(2-amino-2-carboxyethyl)-7,8-dioxo-1,2,3,4,7,8-hexahydroquinoline-2,4-dicarboxylate + 3 O2 = pyrroloquinoline quinone + 2 H2O2 + 2 H2O + H(+). The protein operates within cofactor biosynthesis; pyrroloquinoline quinone biosynthesis. Ring cyclization and eight-electron oxidation of 3a-(2-amino-2-carboxyethyl)-4,5-dioxo-4,5,6,7,8,9-hexahydroquinoline-7,9-dicarboxylic-acid to PQQ. The polypeptide is Pyrroloquinoline-quinone synthase (Xanthomonas euvesicatoria pv. vesicatoria (strain 85-10) (Xanthomonas campestris pv. vesicatoria)).